A 143-amino-acid chain; its full sequence is Nucleoside diphosphate kinase (143 aa).

Residues lysine 11, phenylalanine 59, arginine 87, threonine 93, arginine 104, and asparagine 114 each contribute to the ATP site. The Pros-phosphohistidine intermediate role is filled by histidine 117.

The protein belongs to the NDK family. As to quaternary structure, homotetramer. The cofactor is Mg(2+).

The protein resides in the cytoplasm. It catalyses the reaction a 2'-deoxyribonucleoside 5'-diphosphate + ATP = a 2'-deoxyribonucleoside 5'-triphosphate + ADP. It carries out the reaction a ribonucleoside 5'-diphosphate + ATP = a ribonucleoside 5'-triphosphate + ADP. In terms of biological role, major role in the synthesis of nucleoside triphosphates other than ATP. The ATP gamma phosphate is transferred to the NDP beta phosphate via a ping-pong mechanism, using a phosphorylated active-site intermediate. The sequence is that of Nucleoside diphosphate kinase from Tolumonas auensis (strain DSM 9187 / NBRC 110442 / TA 4).